We begin with the raw amino-acid sequence, 140 residues long: Organic hydroperoxide resistance protein-like (140 aa).

Belongs to the OsmC/Ohr family.

The sequence is that of Organic hydroperoxide resistance protein-like from Mycoplasma pneumoniae (strain ATCC 29342 / M129 / Subtype 1) (Mycoplasmoides pneumoniae).